The sequence spans 519 residues: Sugar transport protein MST5 (519 aa).

Residues 1–18 (MAGGAMVQTVGGKTYPGK) are Cytoplasmic-facing. The chain crosses the membrane as a helical span at residues 19-39 (MTAFVFFTCLVASSGGLIFGY). Residues 40–80 (DIGISGGVTSMDSFLSEFFPSVYAQAKASKDTNQYCKFDSQ) lie on the Extracellular side of the membrane. Residues 81-101 (LLTLFTSSLYLAALATSFVAA) form a helical membrane-spanning segment. Residues 102 to 110 (WVTRVFGRK) are Cytoplasmic-facing. The chain crosses the membrane as a helical span at residues 111-127 (WSMFCGGVTFLAGSALN). Residue Gly128 is a topological domain, extracellular. Residues 129-149 (AATDVMMLILGRILLGIGVGF) traverse the membrane as a helical segment. Over 150-167 (ANQSVPLYLSEMAPANLR) the chain is Cytoplasmic. A helical transmembrane segment spans residues 168–188 (GMLNIGFQLMTTIGILSANLI). Over 189–202 (NYATSSIEGGWGWR) the chain is Extracellular. Residues 203 to 223 (IGLGLAGVPALIITLGALVLP) traverse the membrane as a helical segment. The Cytoplasmic segment spans residues 224-295 (DTPNSLIARG…IAILIPCFQQ (72 aa)). A helical membrane pass occupies residues 296–316 (LTGINVIMFYAPVLFLTIGFA). Topologically, residues 317–321 (GDASL) are extracellular. A helical transmembrane segment spans residues 322–342 (MSAVITGLVNMFATVVSIISV). Topologically, residues 343–357 (DRLGRRVLFLQGGTQ) are cytoplasmic. A helical transmembrane segment spans residues 358-378 (MFISQVVVGTLIALQFGVAGV). Residues 379–386 (GEMSRSYA) are Extracellular-facing. A helical membrane pass occupies residues 387–407 (ILLVLFICMYVAGFAWSWGPL). At 408–426 (GWLVPSEVFALEIRSAGQS) the chain is on the cytoplasmic side. Residues 427-447 (IAVCVNMMLTFVIGQAFLTML) traverse the membrane as a helical segment. At 448–451 (CHLK) the chain is on the extracellular side. A helical transmembrane segment spans residues 452–472 (FGLFYFFAGWMLVMTTFVALF). At 473–519 (LPETKGVPIEEMNHVWSRHWFWGSYVTAHDVAGAGAGGGGNRRSHNV) the chain is on the cytoplasmic side.

The protein belongs to the major facilitator superfamily. Sugar transporter (TC 2.A.1.1) family. As to expression, expressed in panicles before heading. Expressed in flowers before pollination.

It localises to the membrane. Functionally, mediates active uptake of hexoses by sugar:proton symport. Can transport glucose, xylose and 3-O-methylglucose. May play a role at the early stage of seed development. The sequence is that of Sugar transport protein MST5 from Oryza sativa subsp. japonica (Rice).